The following is a 405-amino-acid chain: Glucose-1-phosphate adenylyltransferase 1 (405 aa).

Alpha-D-glucose 1-phosphate contacts are provided by residues Tyr-96, Gly-161, 176–177 (EK), and Ser-194.

Belongs to the bacterial/plant glucose-1-phosphate adenylyltransferase family. As to quaternary structure, homotetramer.

The enzyme catalyses alpha-D-glucose 1-phosphate + ATP + H(+) = ADP-alpha-D-glucose + diphosphate. Its pathway is glycan biosynthesis; glycogen biosynthesis. Its function is as follows. Involved in the biosynthesis of ADP-glucose, a building block required for the elongation reactions to produce glycogen. Catalyzes the reaction between ATP and alpha-D-glucose 1-phosphate (G1P) to produce pyrophosphate and ADP-Glc. This is Glucose-1-phosphate adenylyltransferase 1 from Vibrio vulnificus (strain CMCP6).